The chain runs to 127 residues: Small ribosomal subunit protein uS12m (127 aa).

It belongs to the universal ribosomal protein uS12 family.

It is found in the mitochondrion. The protein is Small ribosomal subunit protein uS12m (RPS12) of Acanthamoeba castellanii (Amoeba).